We begin with the raw amino-acid sequence, 455 residues long: SVGFKAGVKDYKLTYYTPEYETKDTDILAAFRVTPQPGVPPEEAGAAVAAESSTGTWTTVWTDGLTSLDRYKGRCYHIEPVAGEENQYIAYVAYPLDLFEEGSVTNMFTSIVGNVFGFKALRALRLEDFRIPTAYVKTFQGPPHGIQVERDKLNKYGRPLLGCTIKPKLGLSAKNYGRAVYECLRGGLDFTKDDENVNSQPFMRWRDRFLFCAEALYKAQAETGEIKGHYLNATAGTCEEMIKRAVFARELGVPIIMHDYLTGGFTANTSLAHYCRDNGLLLHIHRAMHAVIDRQKNHGMHFRVLAKALRLSGGDHVHSGTVVGKLEGEREITLGFVDLIRDDLIEKDRSRGIYFTQDWVSLPGVLPVASGGIHVWHMPALTEIFGDDSVLQFGGGTLGHPWGNAPGAVANRVALEACVQARNEGRDLAREGNEIIREASKWSPELAAACEVWKE.

Lys-5 bears the N6,N6,N6-trimethyllysine mark. Asn-114 and Thr-164 together coordinate substrate. The active-site Proton acceptor is Lys-166. Lys-168 serves as a coordination point for substrate. Residues Lys-192, Asp-194, and Glu-195 each coordinate Mg(2+). N6-carboxylysine is present on Lys-192. His-285 serves as the catalytic Proton acceptor. Positions 286, 318, and 370 each coordinate substrate.

It belongs to the RuBisCO large chain family. Type I subfamily. As to quaternary structure, heterohexadecamer of 8 large chains and 8 small chains; disulfide-linked. The disulfide link is formed within the large subunit homodimers. It depends on Mg(2+) as a cofactor. The disulfide bond which can form in the large chain dimeric partners within the hexadecamer appears to be associated with oxidative stress and protein turnover.

It localises to the plastid. It is found in the chloroplast. The catalysed reaction is 2 (2R)-3-phosphoglycerate + 2 H(+) = D-ribulose 1,5-bisphosphate + CO2 + H2O. It catalyses the reaction D-ribulose 1,5-bisphosphate + O2 = 2-phosphoglycolate + (2R)-3-phosphoglycerate + 2 H(+). Functionally, ruBisCO catalyzes two reactions: the carboxylation of D-ribulose 1,5-bisphosphate, the primary event in carbon dioxide fixation, as well as the oxidative fragmentation of the pentose substrate in the photorespiration process. Both reactions occur simultaneously and in competition at the same active site. In Erythrina crista-galli (Cockspur coral tree), this protein is Ribulose bisphosphate carboxylase large chain.